Reading from the N-terminus, the 183-residue chain is Glutathione-regulated potassium-efflux system ancillary protein KefG (183 aa).

Belongs to the NAD(P)H dehydrogenase (quinone) family. KefG subfamily. As to quaternary structure, interacts with KefB.

Its subcellular location is the cell inner membrane. It carries out the reaction a quinone + NADH + H(+) = a quinol + NAD(+). It catalyses the reaction a quinone + NADPH + H(+) = a quinol + NADP(+). Regulatory subunit of a potassium efflux system that confers protection against electrophiles. Required for full activity of KefB. The chain is Glutathione-regulated potassium-efflux system ancillary protein KefG from Salmonella gallinarum (strain 287/91 / NCTC 13346).